Reading from the N-terminus, the 1107-residue chain is Ubiquitin-associated protein 2-like (1107 aa).

At M1 the chain carries N-acetylmethionine. Positions 1–33 (MMTSVGTNRARGNWEQPQNQNQTQHKQRPQATA) are disordered. Residues 49–89 (DFEEKVKQLIDITGKNQDECVIALHDCNGDVNRAINVLLEG) enclose the UBA domain. Residues 92-229 (DTHSWEMVGK…NTWNNTGHFE (138 aa)) form a disordered region. Over residues 118–132 (EEGKENRDRDRDYSR) the composition is skewed to basic and acidic residues. Residues 133-145 (RRGGPPRRGRGAS) show a composition bias toward basic residues. Asymmetric dimethylarginine occurs at positions 187 and 190. Residues 213–226 (NYGNSSGNTWNNTG) are compositionally biased toward low complexity. A phosphoserine mark is found at S376, S380, and S436. T445 is subject to Phosphothreonine. Disordered stretches follow at residues 461 to 513 (AVAT…KKTS), 550 to 676 (SDYE…IPSL), and 689 to 814 (ANQH…LPPG). Phosphoserine occurs at positions 474, 487, 490, 491, and 497. 2 stretches are compositionally biased toward low complexity: residues 494–505 (QSSSPQPAQQKL) and 554–589 (STPT…SQES). Over residues 590 to 656 (GYQSGPIQST…TQLQTTQSVE (67 aa)) the composition is skewed to polar residues. A phosphoserine mark is found at S624, S625, S628, and S629. Positions 665–675 (SESPSTSSIPS) are enriched in low complexity. Polar residues predominate over residues 689–713 (ANQHSSSLSGLSHTEEIPNTTTTQH). Over residues 714–804 (SSALSTQQNT…STRSSVATTS (91 aa)) the composition is skewed to low complexity. Phosphoserine occurs at positions 872 and 879. Disordered stretches follow at residues 885–921 (FGRG…LNPA) and 1060–1107 (QQPH…WGAN). Composition is skewed to low complexity over residues 893 to 916 (PAPA…TQQT) and 1073 to 1087 (QDGQ…QTSS). A compositionally biased stretch (polar residues) spans 1088–1107 (IPQKPQTNKSAYNSYSWGAN).

In terms of assembly, interacts with BMI1. Part of a complex consisting of UBAP2L, BMI1 and RNF2. Interacts with G3BP1 (via NTF2 domain); promoting stress granule formation.

It localises to the nucleus. Its subcellular location is the chromosome. The protein localises to the cytoplasm. The protein resides in the stress granule. Functionally, recruits the ubiquitination machinery to RNA polymerase II for polyubiquitination, removal and degradation, when the transcription-coupled nucleotide excision repair (TC-NER) machinery fails to resolve DNA damage. Plays an important role in the activity of long-term repopulating hematopoietic stem cells (LT-HSCs). Is a regulator of stress granule assembly, required for their efficient formation. Required for proper brain development and neocortex lamination. In Mus musculus (Mouse), this protein is Ubiquitin-associated protein 2-like.